We begin with the raw amino-acid sequence, 314 residues long: 3'-5' exoribonuclease YhaM (314 aa).

The HD domain maps to 163–279 (HVVSMLHLAK…LHYIDNLDAK (117 aa)).

The protein belongs to the YhaM family.

In terms of biological role, shows a 3'-5' exoribonuclease activity. The protein is 3'-5' exoribonuclease YhaM of Bacillus pumilus (strain SAFR-032).